The primary structure comprises 202 residues: Dephospho-CoA kinase (202 aa).

Residues 4–201 (VVALTGGIAS…QKYLAMSRQN (198 aa)) enclose the DPCK domain. 12 to 17 (ASGKTT) is a binding site for ATP.

The protein belongs to the CoaE family.

The protein resides in the cytoplasm. It carries out the reaction 3'-dephospho-CoA + ATP = ADP + CoA + H(+). It functions in the pathway cofactor biosynthesis; coenzyme A biosynthesis; CoA from (R)-pantothenate: step 5/5. Its function is as follows. Catalyzes the phosphorylation of the 3'-hydroxyl group of dephosphocoenzyme A to form coenzyme A. In Vibrio cholerae serotype O1 (strain ATCC 39315 / El Tor Inaba N16961), this protein is Dephospho-CoA kinase.